Consider the following 440-residue polypeptide: GTPase Der (440 aa).

2 EngA-type G domains span residues 4-168 (PIVA…NPED) and 177-352 (IKVA…NQNA). GTP-binding positions include 10–17 (GRPNVGKS), 57–61 (DTGGI), 120–123 (NKVD), 183–190 (GKPNVGKS), 230–234 (DTAGI), and 295–298 (NKWD). The 85-residue stretch at 353–437 (MRIPTGALNE…PIRFILREKT (85 aa)) folds into the KH-like domain.

It belongs to the TRAFAC class TrmE-Era-EngA-EngB-Septin-like GTPase superfamily. EngA (Der) GTPase family. Associates with the 50S ribosomal subunit.

Its function is as follows. GTPase that plays an essential role in the late steps of ribosome biogenesis. The protein is GTPase Der of Alkaliphilus oremlandii (strain OhILAs) (Clostridium oremlandii (strain OhILAs)).